The sequence spans 339 residues: Glycerol-3-phosphate dehydrogenase [NAD(P)+] (339 aa).

Residues Ser15, Tyr16, His36, and Lys110 each coordinate NADPH. Lys110, Gly139, and Thr141 together coordinate sn-glycerol 3-phosphate. NADPH is bound at residue Ala143. Lys195, Asp248, Ser258, Arg259, and Asn260 together coordinate sn-glycerol 3-phosphate. Residue Lys195 is the Proton acceptor of the active site. Position 259 (Arg259) interacts with NADPH. NADPH is bound by residues Val283 and Glu285.

It belongs to the NAD-dependent glycerol-3-phosphate dehydrogenase family.

The protein localises to the cytoplasm. It carries out the reaction sn-glycerol 3-phosphate + NAD(+) = dihydroxyacetone phosphate + NADH + H(+). It catalyses the reaction sn-glycerol 3-phosphate + NADP(+) = dihydroxyacetone phosphate + NADPH + H(+). The protein operates within membrane lipid metabolism; glycerophospholipid metabolism. Its function is as follows. Catalyzes the reduction of the glycolytic intermediate dihydroxyacetone phosphate (DHAP) to sn-glycerol 3-phosphate (G3P), the key precursor for phospholipid synthesis. The chain is Glycerol-3-phosphate dehydrogenase [NAD(P)+] from Klebsiella pneumoniae subsp. pneumoniae (strain ATCC 700721 / MGH 78578).